A 586-amino-acid polypeptide reads, in one-letter code: Phosphatidylinositol-3-phosphatase SAC1-A (586 aa).

Residues 1 to 519 (MANAYERFNL…TPLHVKKDWK (519 aa)) lie on the Cytoplasmic side of the membrane. An SAC domain is found at 121–450 (INNVLNTDGF…ANACAKQYAG (330 aa)). The tract at residues 451–586 (TGALKTDFTR…PKLVQKEKMD (136 aa)) is essential for phosphatidylinositol-4-phosphate phosphatase activity. The chain crosses the membrane as a helical span at residues 520 to 540 (FLLLPVIMVVAFSMCIICLLM). The Lumenal portion of the chain corresponds to 541-547 (AGDTWTE). The helical transmembrane segment at 548 to 568 (TLAYVLFWGMASALTAAVIVV) threads the bilayer. Over 569–586 (NGREFVDAPKLVQKEKMD) the chain is Cytoplasmic.

It localises to the endoplasmic reticulum membrane. Its subcellular location is the golgi apparatus membrane. The enzyme catalyses a 1,2-diacyl-sn-glycero-3-phospho-(1D-myo-inositol-3-phosphate) + H2O = a 1,2-diacyl-sn-glycero-3-phospho-(1D-myo-inositol) + phosphate. It catalyses the reaction a 1,2-diacyl-sn-glycero-3-phospho-(1D-myo-inositol 4-phosphate) + H2O = a 1,2-diacyl-sn-glycero-3-phospho-(1D-myo-inositol) + phosphate. Functionally, phosphoinositide phosphatase which catalyzes the hydrolysis of phosphatidylinositol 4-phosphate (PtdIns(4)P), phosphatidylinositol 3-phosphate (PtdIns(3)P) and has low activity towards phosphatidylinositol-3,5-bisphosphate (PtdIns(3,5)P2). This Danio rerio (Zebrafish) protein is Phosphatidylinositol-3-phosphatase SAC1-A (sacm1la).